The chain runs to 264 residues: Potassium channel regulatory protein (264 aa).

Residues 5–74 (DLVTLNVGGR…LRNHELLLPS (70 aa)) enclose the BTB domain.

Can form homooligomers. Interacts with KCNA1 (via cytoplasmic N-terminal domain) and KCNA4.

The protein resides in the endoplasmic reticulum. Its function is as follows. Inhibits potassium fluxes in cells. May regulate Kv1 family channel proteins by retaining a fraction of channels in endomembranes. In Mus musculus (Mouse), this protein is Potassium channel regulatory protein (Kcnrg).